A 1262-amino-acid polypeptide reads, in one-letter code: Putative late blight resistance protein homolog R1B-23 (1262 aa).

Coiled-coil stretches lie at residues 364–384 and 475–496; these read DSLA…ESMQ and RMNE…KLLN. The NB-ARC domain occupies 475-761; the sequence is RMNEEIVGFE…ISESFIKSCE (287 aa). 508 to 515 serves as a coordination point for ATP; it reads GMPGLGKT. LRR repeat units lie at residues 890-914, 933-961, 1036-1059, 1064-1083, 1084-1112, and 1133-1157; these read FKFL…LFYL, LWNL…VWDM, PIRL…CISA, YLEL…TADH, LKHL…MFPQ, and FPNL…FMDI. The HMA domain maps to 1181 to 1248; sequence ETQVEDNQNT…KLRNVAYADE (68 aa).

This sequence belongs to the disease resistance NB-LRR family.

The protein resides in the cytoplasm. The protein localises to the membrane. In terms of biological role, confers resistance to late blight (Phytophthora infestans) races carrying the avirulence gene Avr1. Resistance proteins guard the plant against pathogens that contain an appropriate avirulence protein via an indirect interaction with this avirulence protein. That triggers a defense system including the hypersensitive response, which restricts the pathogen growth. This Solanum demissum (Wild potato) protein is Putative late blight resistance protein homolog R1B-23 (R1B-23).